The primary structure comprises 250 residues: 2-C-methyl-D-erythritol 4-phosphate cytidylyltransferase (250 aa).

This sequence belongs to the IspD/TarI cytidylyltransferase family. IspD subfamily.

The enzyme catalyses 2-C-methyl-D-erythritol 4-phosphate + CTP + H(+) = 4-CDP-2-C-methyl-D-erythritol + diphosphate. It functions in the pathway isoprenoid biosynthesis; isopentenyl diphosphate biosynthesis via DXP pathway; isopentenyl diphosphate from 1-deoxy-D-xylulose 5-phosphate: step 2/6. Its function is as follows. Catalyzes the formation of 4-diphosphocytidyl-2-C-methyl-D-erythritol from CTP and 2-C-methyl-D-erythritol 4-phosphate (MEP). The sequence is that of 2-C-methyl-D-erythritol 4-phosphate cytidylyltransferase from Streptomyces avermitilis (strain ATCC 31267 / DSM 46492 / JCM 5070 / NBRC 14893 / NCIMB 12804 / NRRL 8165 / MA-4680).